The following is a 152-amino-acid chain: Large ribosomal subunit protein uL30 (152 aa).

This sequence belongs to the universal ribosomal protein uL30 family. Part of the 50S ribosomal subunit.

The polypeptide is Large ribosomal subunit protein uL30 (Methanosphaera stadtmanae (strain ATCC 43021 / DSM 3091 / JCM 11832 / MCB-3)).